The chain runs to 37 residues: Cytochrome b6-f complex subunit 5 (37 aa).

The helical transmembrane segment at 5–25 (LLSGIVLGMITVSALGLFVAA) threads the bilayer.

It belongs to the PetG family. In terms of assembly, the 4 large subunits of the cytochrome b6-f complex are cytochrome b6, subunit IV (17 kDa polypeptide, PetD), cytochrome f and the Rieske protein, while the 4 small subunits are PetG, PetL, PetM and PetN. The complex functions as a dimer.

The protein localises to the plastid. Its subcellular location is the chloroplast thylakoid membrane. Its function is as follows. Component of the cytochrome b6-f complex, which mediates electron transfer between photosystem II (PSII) and photosystem I (PSI), cyclic electron flow around PSI, and state transitions. PetG is required for either the stability or assembly of the cytochrome b6-f complex. This Trieres chinensis (Marine centric diatom) protein is Cytochrome b6-f complex subunit 5.